The following is a 755-amino-acid chain: Ligand-dependent nuclear receptor-interacting factor 1 (755 aa).

A Glycyl lysine isopeptide (Lys-Gly) (interchain with G-Cter in SUMO2) cross-link involves residue Lys270. Ser391, Ser419, and Ser425 each carry phosphoserine. Lys436 participates in a covalent cross-link: Glycyl lysine isopeptide (Lys-Gly) (interchain with G-Cter in SUMO2). The PxVxL motif motif lies at Leu565–Leu569. Ser584 is subject to Phosphoserine. A Glycyl lysine isopeptide (Lys-Gly) (interchain with G-Cter in SUMO2) cross-link involves residue Lys590. 2 consecutive short sequence motifs (nuclear localization signal) follow at residues Lys612–Lys615 and Lys625–Lys628. A disordered region spans residues Ile665–Ser698. Basic and acidic residues predominate over residues Thr671–Lys690. Residues Thr678 to Glu711 adopt a coiled-coil conformation. Lys687 is covalently cross-linked (Glycyl lysine isopeptide (Lys-Gly) (interchain with G-Cter in SUMO2)). Thr717 is modified (phosphothreonine).

The protein belongs to the LRIF1 family. As to quaternary structure, interacts with RARA. Interacts with SMCHD1; leading to recruitment to inactivated chromosome X in females. Interacts (via PxVxL motif) with HP1 (CBX1/HP1-beta, CBX3/HP1-gamma and CBX5/HP1-alpha).

It localises to the chromosome. It is found in the nucleus matrix. Its function is as follows. Together with SMCHD1, involved in chromosome X inactivation in females by promoting the compaction of heterochromatin. Also able to repress the ligand-induced transcriptional activity of retinoic acid receptor alpha (RARA), possibly through direct recruitment of histone deacetylases. The sequence is that of Ligand-dependent nuclear receptor-interacting factor 1 (Lrif1) from Mus musculus (Mouse).